The chain runs to 83 residues: Delta-conotoxin-like Ac6.2 (83 aa).

The N-terminal stretch at 1–22 is a signal peptide; that stretch reads MKLTCVVIVAVLFLTAWTFVTA. The propeptide occupies 23 to 51; that stretch reads DDSRYGLKNLFPKARHEMKNPEASKLNKR. Intrachain disulfides connect cysteine 54–cysteine 69, cysteine 61–cysteine 73, and cysteine 68–cysteine 78. Proline 57 and proline 65 each carry 4-hydroxyproline.

It belongs to the conotoxin O1 superfamily. Expressed by the venom duct.

The protein resides in the secreted. Delta-conotoxins bind to site 6 of voltage-gated sodium channels (Nav) and inhibit the inactivation process. This Conus achatinus (Little frog cone) protein is Delta-conotoxin-like Ac6.2.